Reading from the N-terminus, the 440-residue chain is Adenylosuccinate synthetase (440 aa).

GTP is bound by residues 14–20 (GDEGKGK) and 42–44 (GHT). Aspartate 15 functions as the Proton acceptor in the catalytic mechanism. Mg(2+) is bound by residues aspartate 15 and glycine 42. IMP contacts are provided by residues 15 to 18 (DEGK), 40 to 43 (NAGH), threonine 131, arginine 145, glutamine 226, threonine 241, and arginine 313. The active-site Proton donor is histidine 43. 309–315 (ATTGRQR) lines the substrate pocket. GTP-binding positions include arginine 315, 341–343 (KLD), and 423–425 (STG).

It belongs to the adenylosuccinate synthetase family. Homodimer. The cofactor is Mg(2+).

Its subcellular location is the cytoplasm. It catalyses the reaction IMP + L-aspartate + GTP = N(6)-(1,2-dicarboxyethyl)-AMP + GDP + phosphate + 2 H(+). The protein operates within purine metabolism; AMP biosynthesis via de novo pathway; AMP from IMP: step 1/2. Plays an important role in the de novo pathway of purine nucleotide biosynthesis. Catalyzes the first committed step in the biosynthesis of AMP from IMP. This Hydrogenovibrio crunogenus (strain DSM 25203 / XCL-2) (Thiomicrospira crunogena) protein is Adenylosuccinate synthetase.